A 642-amino-acid chain; its full sequence is MRSLTTKTSSALLTVWGLLSVSLMPSVGQADKTAGDYFVHSLPGAPAGPLLKMHAGHIEVTPEHHGNIFFWHFQNRHIANKQRTVIWLNGGPGCSSEDGALMEIGPYRVKDGSNGPKLEYNPGSWDEFANVMFVDNPVGTGFSFVDSDSYIHDLPEMADQFVQFLEKWFALFPEYEHDDLYLAGESYAGQHIPYITKAILERNKKPDAKHKWPVKGMLIGNGWISPVEQYMSYLPFAYEKGLVKKDSEKAKKLESQQAICTKMLNENGGRDKVDNSQCEQILQEILSTTQSKGSDGNMQCYNMYDVRLKDSYPSCGMNWPPDLVNVTPYLRRSDVVAALHISPEKRTGWTECNGAVGSAFRAANSKPSIQILPELLAEVPTILFSGAEDLICNHIGTEELISNMEWNGGKGFELGSGTWAPRRDWEFEGEPAGFWQEARNLTYVLFYNSSHMVPFDYARRTRDMLDRFMKVDIASIGGAPTDSRIDGEKGLETSVGGHPNSTAAAEAEEERLEAAKWNAYYKSGEIVLVIVVIAASAWGYYIWRERRQRAGYAGIFGGDTPMALAGARSGSRGAAGLEDFRNKRNARDVEAADFDESELDELHVRSPTDDMDRDRYSVGSASDDESIGKRNGNGKGKEKSYS.

An N-terminal signal peptide occupies residues 1 to 30; sequence MRSLTTKTSSALLTVWGLLSVSLMPSVGQA. At 31–522 the chain is on the lumenal side; it reads DKTAGDYFVH…EAAKWNAYYK (492 aa). Catalysis depends on residues serine 186 and aspartate 389. N-linked (GlcNAc...) asparagine glycans are attached at residues asparagine 440 and asparagine 448. Histidine 451 is a catalytic residue. A disordered region spans residues 480–505; sequence PTDSRIDGEKGLETSVGGHPNSTAAA. A glycan (N-linked (GlcNAc...) asparagine) is linked at asparagine 500. A helical transmembrane segment spans residues 523 to 543; the sequence is SGEIVLVIVVIAASAWGYYIW. The Cytoplasmic segment spans residues 544–642; it reads RERRQRAGYA…NGKGKEKSYS (99 aa). Residues 598–642 form a disordered region; it reads ELDELHVRSPTDDMDRDRYSVGSASDDESIGKRNGNGKGKEKSYS. A compositionally biased stretch (basic and acidic residues) spans 600–616; the sequence is DELHVRSPTDDMDRDRY.

Belongs to the peptidase S10 family.

The protein resides in the golgi apparatus. Its subcellular location is the trans-Golgi network membrane. It carries out the reaction Preferential release of a C-terminal arginine or lysine residue.. In terms of biological role, protease with a carboxypeptidase B-like function involved in the C-terminal processing of the lysine and arginine residues from protein precursors. Promotes cell fusion and is involved in the programmed cell death. The chain is Pheromone-processing carboxypeptidase kex1 (kex1) from Sclerotinia sclerotiorum (strain ATCC 18683 / 1980 / Ss-1) (White mold).